Here is a 154-residue protein sequence, read N- to C-terminus: Myoglobin (154 aa).

Residues 2–148 (GLSDGEWQLV…FRNDMAAQYK (147 aa)) enclose the Globin domain. Ser4 carries the phosphoserine modification. His65 lines the nitrite pocket. An O2-binding site is contributed by His65. Phosphothreonine is present on Thr68. Heme b is bound at residue His94.

It belongs to the globin family. As to quaternary structure, monomeric.

It is found in the cytoplasm. Its subcellular location is the sarcoplasm. The catalysed reaction is Fe(III)-heme b-[protein] + nitric oxide + H2O = Fe(II)-heme b-[protein] + nitrite + 2 H(+). The enzyme catalyses H2O2 + AH2 = A + 2 H2O. Monomeric heme protein which primary function is to store oxygen and facilitate its diffusion within muscle tissues. Reversibly binds oxygen through a pentacoordinated heme iron and enables its timely and efficient release as needed during periods of heightened demand. Depending on the oxidative conditions of tissues and cells, and in addition to its ability to bind oxygen, it also has a nitrite reductase activity whereby it regulates the production of bioactive nitric oxide. Under stress conditions, like hypoxia and anoxia, it also protects cells against reactive oxygen species thanks to its pseudoperoxidase activity. In Cervus elaphus (Red deer), this protein is Myoglobin (MB).